Consider the following 502-residue polypeptide: ATP synthase subunit alpha (502 aa).

Position 169–176 (169–176 (GDRQTGKT)) interacts with ATP.

This sequence belongs to the ATPase alpha/beta chains family. As to quaternary structure, F-type ATPases have 2 components, CF(1) - the catalytic core - and CF(0) - the membrane proton channel. CF(1) has five subunits: alpha(3), beta(3), gamma(1), delta(1), epsilon(1). CF(0) has three main subunits: a(1), b(2) and c(9-12). The alpha and beta chains form an alternating ring which encloses part of the gamma chain. CF(1) is attached to CF(0) by a central stalk formed by the gamma and epsilon chains, while a peripheral stalk is formed by the delta and b chains.

It is found in the cell inner membrane. The enzyme catalyses ATP + H2O + 4 H(+)(in) = ADP + phosphate + 5 H(+)(out). Produces ATP from ADP in the presence of a proton gradient across the membrane. The alpha chain is a regulatory subunit. In Geotalea uraniireducens (strain Rf4) (Geobacter uraniireducens), this protein is ATP synthase subunit alpha.